We begin with the raw amino-acid sequence, 510 residues long: Hydroperoxide bicyclase CYP5164A3, mitochondrial (510 aa).

The N-terminal 31 residues, 1-31 (MQRVGAASPTCSSLQAPAAAPPILTISPHHR), are a transit peptide targeting the mitochondrion. Residue C452 coordinates heme.

This sequence belongs to the cytochrome P450 family. Requires heme as cofactor.

Its subcellular location is the mitochondrion. The enzyme catalyses (13S)-hydroperoxy-(9Z,11E,15Z)-octadecatrienoate = plasmodiophorol A. It catalyses the reaction (13S)-hydroperoxy-(9Z,11E,15Z)-octadecatrienoate = plasmodiophorol B. The catalysed reaction is (13S)-hydroperoxy-(9Z,11E,15Z)-octadecatrienoate = ectocarpin A + H2O. It carries out the reaction (15S)-hydroperoxy-(5Z,8Z,11Z,13E,17Z)-eicosapentaenoate = ectocarpin B + H2O. The enzyme catalyses (15S)-hydroperoxy-(5Z,8Z,11Z,13E,17Z)-eicosapentaenoate = ectocarpin C. It catalyses the reaction (15S)-hydroperoxy-(5Z,8Z,11Z,13E,17Z)-eicosapentaenoate + H2O = ectocarpin D. The catalysed reaction is (15S)-hydroperoxy-(5Z,8Z,11Z,13E,17Z)-eicosapentaenoate = 14-oxo-15-hydroxy-(5Z,8Z,11Z,17Z)-eicosatetraenoate. It participates in lipid metabolism; oxylipin biosynthesis. Cytochrome P450 hydroperoxide bicyclase involved in the metabolism of oxylipins 'ectocarpins' natural products, such as hybridalactone, ecklonilactones and derivatives. Isomerizes the hydroperoxides into epoxyalcohols via epoxyallylic radical. Can use alpha-linolenic acid 13(S)-hydroperoxide (13-HPOTE) and eicosapentaenoic acid 15(S)-hydroperoxide (15-HPEPE) as preferred substrate to produce corresponding heterobicyclic oxylipins, such as plasmodiophorol A (6-oxabicyclo[3.1.0]hexane), plasmodiophorol B (2-oxabicyclo[2.2.1]heptane) and plasmodiophorol C (4-hydroxymethyl-1,2-dihydroxycyclopentane) as well as ectocarpin A (3-propenyl-6-oxabicyclo[3.1.0]hexane) formed at about 15:3:3:1 ratio for 13-HPOTE, and analogous to plasmodiophorols A and B including ectocarpin B (3-[(1'E)-propenyl]-6-oxabicyclo[3.1.0]hexane), ectocarpin C, 14-oxo-15-hydroxy-5,8,11,17-eicosate-traenoic acid and ectocarpin D for 15-HPEPE. Barely able to use linoleic acid 13-hydroperoxide (13-HPODE), linoleic acid 9-hydroperoxide (9-HPODE), eicosapentaenoic acid 15-hydroperoxide (15-HPEPE), and alpha-linolenic acid 9-hydroperoxide (9-HPOTE) as substrates. The polypeptide is Hydroperoxide bicyclase CYP5164A3, mitochondrial (Ectocarpus siliculosus (Brown alga)).